A 1661-amino-acid chain; its full sequence is ATP-dependent bile acid permease (1661 aa).

Residues 1–33 lie on the Lumenal side of the membrane; it reads MHHVLNSTRPDHRFWFYDDVTQYGRTKYLNYYT. Asn-6 carries N-linked (GlcNAc...) asparagine glycosylation. The helical transmembrane segment at 34 to 54 threads the bilayer; sequence PLVLLIFTVLFITYNIWKHYY. At 55-74 the chain is on the cytoplasmic side; that stretch reads YYDVLHLKQKNPIDELLYSS. The chain crosses the membrane as a helical span at residues 75–95; sequence TDEDEQSPLINNNTITTNYVD. The Lumenal segment spans residues 96 to 133; that stretch reads NNCTKDALKNRHFSLEKLKSVKVNGEPHGTPEIVRRGF. Asn-97 carries an N-linked (GlcNAc...) asparagine glycan. A helical membrane pass occupies residues 134–154; sequence IEKSRIILEFFLVLSQVIIHS. At 155–166 the chain is on the cytoplasmic side; the sequence is FILLHYVNKNPE. The chain crosses the membrane as a helical span at residues 167 to 187; sequence FTQQGTITGLVEWCALFIIVS. The Lumenal segment spans residues 188 to 205; the sequence is LRLANVNQNFKFINKYPG. The chain crosses the membrane as a helical span at residues 206–226; it reads NLWSVSFINYLALFISMILPF. Topologically, residues 227–345 are cytoplasmic; sequence RSIFIHHINS…VKRKRIFSLN (119 aa). Residues 346–366 form a helical membrane-spanning segment; sequence LFFFFSNYLVLQCFWAFLGSV. One can recognise an ABC transmembrane type-1 1 domain in the interval 354 to 662; it reads LVLQCFWAFL…LSDMLSFVVQ (309 aa). Residues 367–393 are Lumenal-facing; that stretch reads LSFIPTVLLKRILEYVEDQSSAPSNLA. A helical transmembrane segment spans residues 394 to 414; the sequence is WFYVTVMFVGRILVAICQAQA. Residues 415–495 lie on the Cytoplasmic side of the membrane; it reads LFFGRRVCIR…AFKVSEICGY (81 aa). The interval 445–468 is disordered; sequence NKTKPSNEDPQEINDQKSINGDEE. Residues 496-516 traverse the membrane as a helical segment; sequence LHSFLEAFVMTVVALALLYRL. Residues 517-519 lie on the Lumenal side of the membrane; the sequence is LGF. Residues 520–540 traverse the membrane as a helical segment; sequence AAIVGVLIIVAMLPLNYKLAK. The Cytoplasmic segment spans residues 541-602; that stretch reads YIGDLQKKNL…LLLMRSIVWS (62 aa). Residues 603-623 traverse the membrane as a helical segment; sequence ISSFLWFVTPTIVTAASFAYY. Residues 624–644 are Lumenal-facing; sequence IYVQGEVLTTPVAFTALSLFT. The helical transmembrane segment at 645–665 threads the bilayer; that stretch reads LLRDPLDRLSDMLSFVVQSKV. The Cytoplasmic segment spans residues 666–1053; that stretch reads SLDRVQDFLN…SWWVRAWASH (388 aa). The ABC transporter 1 domain occupies 694–935; it reads FAFENSTISW…GLFGEDELVK (242 aa). Residue 729–736 participates in ATP binding; it reads GPTGSGKT. Residues Ser-936, Ser-940, and Ser-955 each carry the phosphoserine modification. Positions 1026–1345 constitute an ABC transmembrane type-1 2 domain; sequence VSFLASLFLI…LVRLYSEVEM (320 aa). A helical transmembrane segment spans residues 1054-1074; that stretch reads NVIAKIIPRAQRAIAFISKKA. Residues 1075–1114 are Lumenal-facing; that stretch reads SHLIDWRGSSQISMASAENQPSSGHSTMYYLVLYLIIGFA. Residues 1115–1135 traverse the membrane as a helical segment; sequence QALLGAGKTILNFVAGINASR. The Cytoplasmic portion of the chain corresponds to 1136–1178; the sequence is KIFNMILNKVLHSKIRFFDATPTGRIMNRFSKDIEAIDQELTP. Residues 1179–1199 form a helical membrane-spanning segment; sequence YIQGAFYSLIECLSTVILITF. Position 1200 (Ile-1200) is a topological domain, lumenal. Residues 1201-1221 traverse the membrane as a helical segment; sequence TPQFLSVAIVVSILYYFVGYF. At 1222–1292 the chain is on the cytoplasmic side; that stretch reads YMAGSRELKR…VANRWLAFRI (71 aa). The helical transmembrane segment at 1293–1313 threads the bilayer; it reads DMIGSLVIFGAGLFILFNINN. Topologically, residues 1314 to 1315 are lumenal; the sequence is LD. Residues 1316 to 1336 traverse the membrane as a helical segment; that stretch reads SGMAGISLTYAISFTEGALWL. The Cytoplasmic portion of the chain corresponds to 1337-1661; it reads VRLYSEVEMN…FVEKLNSKKD (325 aa). In terms of domain architecture, ABC transporter 2 spans 1381-1636; that stretch reads IEVNDLSLRY…KQSAFYSMCE (256 aa). Residue 1415-1422 coordinates ATP; it reads GRTGAGKS.

It belongs to the ABC transporter superfamily. ABCC family. Conjugate transporter (TC 3.A.1.208) subfamily.

The protein resides in the vacuole membrane. Its function is as follows. Vacuolar class C ABC transporter which regulates the translocation of phosphatidylcholine to the vacuole lumen, the release of lumenal calcium stores, and acts as a negative regulator of vacuole fusion. Exhibits ATP-dependent bile acid transport. The polypeptide is ATP-dependent bile acid permease (YBT1) (Saccharomyces cerevisiae (strain ATCC 204508 / S288c) (Baker's yeast)).